A 365-amino-acid polypeptide reads, in one-letter code: Anhydro-N-acetylmuramic acid kinase (365 aa).

Position 12-19 (12-19 (GTSLDGID)) interacts with ATP.

This sequence belongs to the anhydro-N-acetylmuramic acid kinase family.

It catalyses the reaction 1,6-anhydro-N-acetyl-beta-muramate + ATP + H2O = N-acetyl-D-muramate 6-phosphate + ADP + H(+). It functions in the pathway amino-sugar metabolism; 1,6-anhydro-N-acetylmuramate degradation. It participates in cell wall biogenesis; peptidoglycan recycling. Its function is as follows. Catalyzes the specific phosphorylation of 1,6-anhydro-N-acetylmuramic acid (anhMurNAc) with the simultaneous cleavage of the 1,6-anhydro ring, generating MurNAc-6-P. Is required for the utilization of anhMurNAc either imported from the medium or derived from its own cell wall murein, and thus plays a role in cell wall recycling. This chain is Anhydro-N-acetylmuramic acid kinase, found in Rhizorhabdus wittichii (strain DSM 6014 / CCUG 31198 / JCM 15750 / NBRC 105917 / EY 4224 / RW1) (Sphingomonas wittichii).